We begin with the raw amino-acid sequence, 790 residues long: von Willebrand factor A domain-containing protein 2 (790 aa).

Positions 1–22 (MRLPWVNGILAFLSSQVLQCLC) are cleaved as a signal peptide. In terms of domain architecture, VWFA 1 spans 50-221 (DILILLDGSN…DAVNGLATSL (172 aa)). Residues 295–332 (PDPCDSQPCKNGGTCIAEGQDKYHCVCPAGFGGDTECA) enclose the EGF-like 1 domain. 3 disulfide bridges follow: Cys298–Cys309, Cys303–Cys319, and Cys321–Cys331. 2 VWFA domains span residues 342–518 (DLLF…QKRI) and 532–702 (DLAF…EDSV). One can recognise an EGF-like 2 domain in the interval 713–748 (PVNLCKPNPCMNDGVCILRQGSYRCDCRGWDGPHCE). Disulfide bonds link Cys717-Cys728, Cys722-Cys737, and Cys739-Cys747. Positions 758–790 (WPQGLHSRSRQQRHSRKRRLKSVSGSRSSRKKP) are disordered. Residues 764–778 (SRSRQQRHSRKRRLK) are compositionally biased toward basic residues.

As to quaternary structure, forms monomers and multimers.

The protein localises to the secreted. In Xenopus laevis (African clawed frog), this protein is von Willebrand factor A domain-containing protein 2 (vwa2).